The chain runs to 691 residues: Elongation factor G (691 aa).

One can recognise a tr-type G domain in the interval 8–282; that stretch reads ERVRNIGIAA…AVIDYLPAPV (275 aa). Residues 17-24, 81-85, and 135-138 contribute to the GTP site; these read AHIDAGKT, DTPGH, and NKMD.

It belongs to the TRAFAC class translation factor GTPase superfamily. Classic translation factor GTPase family. EF-G/EF-2 subfamily.

It is found in the cytoplasm. In terms of biological role, catalyzes the GTP-dependent ribosomal translocation step during translation elongation. During this step, the ribosome changes from the pre-translocational (PRE) to the post-translocational (POST) state as the newly formed A-site-bound peptidyl-tRNA and P-site-bound deacylated tRNA move to the P and E sites, respectively. Catalyzes the coordinated movement of the two tRNA molecules, the mRNA and conformational changes in the ribosome. The sequence is that of Elongation factor G from Synechococcus sp. (strain CC9605).